A 387-amino-acid polypeptide reads, in one-letter code: Ferrochelatase (387 aa).

Residues His-196 and Glu-277 each coordinate Fe cation.

It belongs to the ferrochelatase family.

Its subcellular location is the cytoplasm. The catalysed reaction is heme b + 2 H(+) = protoporphyrin IX + Fe(2+). The protein operates within porphyrin-containing compound metabolism; protoheme biosynthesis; protoheme from protoporphyrin-IX: step 1/1. In terms of biological role, catalyzes the ferrous insertion into protoporphyrin IX. The polypeptide is Ferrochelatase (Cyanothece sp. (strain PCC 7425 / ATCC 29141)).